A 258-amino-acid polypeptide reads, in one-letter code: 4-hydroxy-tetrahydrodipicolinate reductase (258 aa).

Residues 9-14 (GASGRM), 91-93 (GTT), and 115-118 (SPNM) each bind NAD(+). His148 (proton donor/acceptor) is an active-site residue. His149 serves as a coordination point for (S)-2,3,4,5-tetrahydrodipicolinate. Lys152 serves as the catalytic Proton donor. Position 158-159 (158-159 (GT)) interacts with (S)-2,3,4,5-tetrahydrodipicolinate.

Belongs to the DapB family.

It is found in the cytoplasm. It catalyses the reaction (S)-2,3,4,5-tetrahydrodipicolinate + NAD(+) + H2O = (2S,4S)-4-hydroxy-2,3,4,5-tetrahydrodipicolinate + NADH + H(+). It carries out the reaction (S)-2,3,4,5-tetrahydrodipicolinate + NADP(+) + H2O = (2S,4S)-4-hydroxy-2,3,4,5-tetrahydrodipicolinate + NADPH + H(+). The protein operates within amino-acid biosynthesis; L-lysine biosynthesis via DAP pathway; (S)-tetrahydrodipicolinate from L-aspartate: step 4/4. Its function is as follows. Catalyzes the conversion of 4-hydroxy-tetrahydrodipicolinate (HTPA) to tetrahydrodipicolinate. This chain is 4-hydroxy-tetrahydrodipicolinate reductase, found in Lawsonia intracellularis (strain PHE/MN1-00).